A 434-amino-acid polypeptide reads, in one-letter code: F-box/LRR-repeat protein 21 (434 aa).

The 47-residue stretch at 39-85 (LLDWGTLPHHVILQIFQYLPLIDRARASSVCRRWNEVFHIPDLWRKF) folds into the F-box domain. LRR repeat units follow at residues 187-213 (DTPVDDPSLKILVANNSDTLRLLKMSS), 214-239 (CPHVSSDGILCVADHCQGLRELALNY), 242-265 (LSDEILLALSSETHVNLEHLRIDV), 322-347 (GRSVSRAILGRIGLNCPRLIELVVCA), 349-374 (GLLPLDSELIRIAKHCKNLTSLGLSE), and 375-400 (CEVSCSAFVEFVRLCGRRLTQLSIME).

As to quaternary structure, part of the SCF (SKP1-CUL1-F-box) E3 ubiquitin-protein ligase complex SCF(FBXL21) composed of CUL1, SKP1, RBX1 and FBXL21. Interacts with CRY1 and CRY2. In terms of tissue distribution, expressed in the hypothalamus, especially in the suprachiasmatic nucleus (SCN). Expression is driven by the core-clock. There is a pronounced diurnal and circadian expression rhythms rising rapidly at the start of the day and declining at the onset of the night.

The protein localises to the cytoplasm. The protein resides in the cytosol. It localises to the nucleus. The protein operates within protein modification; protein ubiquitination. Substrate-recognition component of the SCF(FBXL21) E3 ubiquitin ligase complex involved in circadian rhythm function. Plays a key role in the maintenance of both the speed and the robustness of the circadian clock oscillation. The SCF(FBXL21) complex mainly acts in the cytosol and mediates ubiquitination of CRY proteins (CRY1 and CRY2), leading to CRY proteins stabilization. The SCF(FBXL21) complex counteracts the activity of the SCF(FBXL3) complex and protects CRY proteins from degradation. Involved in the hypothalamic suprachiasmatic nucleus (SCN) clock regulating temporal organization of the daily activities. The polypeptide is F-box/LRR-repeat protein 21 (Fbxl21) (Mus musculus (Mouse)).